The primary structure comprises 87 residues: Antitoxin RelB1 (87 aa).

Its function is as follows. Antitoxin component of a type II toxin-antitoxin (TA) system. Neutralizes the effect of cognate toxin RelE1, but no other RelE or ParE toxin. In Caulobacter vibrioides (strain ATCC 19089 / CIP 103742 / CB 15) (Caulobacter crescentus), this protein is Antitoxin RelB1 (relB1).